Here is a 315-residue protein sequence, read N- to C-terminus: Homoserine kinase (315 aa).

Position 97–107 (97–107) interacts with ATP; sequence PPARGLGSSAT.

Belongs to the GHMP kinase family. Homoserine kinase subfamily.

Its subcellular location is the cytoplasm. It carries out the reaction L-homoserine + ATP = O-phospho-L-homoserine + ADP + H(+). It participates in amino-acid biosynthesis; L-threonine biosynthesis; L-threonine from L-aspartate: step 4/5. Catalyzes the ATP-dependent phosphorylation of L-homoserine to L-homoserine phosphate. This is Homoserine kinase from Prochlorococcus marinus (strain MIT 9301).